A 1218-amino-acid chain; its full sequence is Protein jagged-1 (1218 aa).

The N-terminal stretch at 1–33 (MRSPRTRGRPGRPLSLLLALLCALRAKVCGASG) is a signal peptide. Over 34 to 1067 (QFELEILSMQ…QRRPLKNRTD (1034 aa)) the chain is Extracellular. N-linked (GlcNAc...) asparagine glycosylation is present at asparagine 143. The 45-residue stretch at 185 to 229 (VTCDDHYYGFGCNKFCRPRDDFFGHYACDQNGNKTCMEGWMGPDC) folds into the DSL domain. 2 cysteine pairs are disulfide-bonded: cysteine 187-cysteine 196 and cysteine 200-cysteine 212. An important for interaction with NOTCH1 region spans residues 199-207 (FCRPRDDFF). Residue asparagine 217 is glycosylated (N-linked (GlcNAc...) asparagine). 40 disulfide bridges follow: cysteine 220–cysteine 229, cysteine 234–cysteine 245, cysteine 238–cysteine 251, cysteine 253–cysteine 262, cysteine 265–cysteine 276, cysteine 271–cysteine 282, cysteine 284–cysteine 293, cysteine 300–cysteine 312, cysteine 306–cysteine 322, cysteine 324–cysteine 333, cysteine 340–cysteine 351, cysteine 345–cysteine 360, cysteine 362–cysteine 371, cysteine 378–cysteine 389, cysteine 383–cysteine 398, cysteine 400–cysteine 409, cysteine 416–cysteine 427, cysteine 421–cysteine 436, cysteine 438–cysteine 447, cysteine 454–cysteine 464, cysteine 458–cysteine 473, cysteine 475–cysteine 484, cysteine 491–cysteine 502, cysteine 496–cysteine 511, cysteine 513–cysteine 522, cysteine 529–cysteine 540, cysteine 534–cysteine 549, cysteine 551–cysteine 560, cysteine 578–cysteine 605, cysteine 599–cysteine 615, cysteine 617–cysteine 626, cysteine 633–cysteine 644, cysteine 638–cysteine 653, cysteine 655–cysteine 664, cysteine 671–cysteine 682, cysteine 676–cysteine 691, cysteine 693–cysteine 702, cysteine 709–cysteine 720, cysteine 714–cysteine 729, and cysteine 731–cysteine 740. The EGF-like 1 domain occupies 230 to 263 (NKAICRQGCSPKHGSCKLPGDCRCQYGWQGLYCD). An EGF-like 2; atypical domain is found at 264–294 (KCIPHPGCVHGTCNEPWQCLCETNWGGQLCD). EGF-like domains follow at residues 296 to 334 (DLNY…PNCE) and 336 to 372 (AEHA…PTCS). Residues 374 to 410 (NIDDCSPNNCSHGGTCQDLVNGFKCVCPPQWTGKTCQ) form the EGF-like 5; calcium-binding domain. N-linked (GlcNAc...) asparagine glycosylation occurs at asparagine 382. In terms of domain architecture, EGF-like 6; calcium-binding spans 412 to 448 (DANECEAKPCVNARSCKNLIASYYCDCLPGWMGQNCD). The EGF-like 7; calcium-binding domain occupies 450–485 (NINDCLGQCQNDASCRDLVNGYRCICPPGYAGDHCE). The region spanning 487–523 (DIDECASNPCLNGGHCQNEINRFQCLCPTGFSGNLCQ) is the EGF-like 8; calcium-binding domain. 2 EGF-like domains span residues 525-561 (DIDY…KNCS) and 586-627 (DTPE…TYCH). Asparagine 559 is a glycosylation site (N-linked (GlcNAc...) asparagine). The EGF-like 11; calcium-binding domain occupies 629–665 (NINDCESNPCKNGGTCIDGVNSYKCICSDGWEGAHCE). Positions 667–703 (NINDCSQNPCHYGGTCRDLVNDFYCDCKNGWKGKTCH) constitute an EGF-like 12; calcium-binding domain. 2 consecutive EGF-like domains span residues 705-741 (RDSQ…TTCN) and 744-780 (RNSS…PICT). The N-linked (GlcNAc...) asparagine glycan is linked to asparagine 745. Intrachain disulfides connect cysteine 748–cysteine 759, cysteine 753–cysteine 768, cysteine 770–cysteine 779, cysteine 786–cysteine 797, cysteine 791–cysteine 806, cysteine 808–cysteine 817, cysteine 824–cysteine 835, cysteine 829–cysteine 844, and cysteine 846–cysteine 855. Residues 782-818 (NTNDCSPHPCYNSGTCVDGDNWYRCECAPGFAGPDCR) form the EGF-like 15; calcium-binding domain. Residues 820–856 (NINECQSSPCAFGATCVDEINGYQCICPPGHSGAKCH) enclose the EGF-like 16; calcium-binding domain. 4 N-linked (GlcNAc...) asparagine glycosylation sites follow: asparagine 960, asparagine 991, asparagine 1045, and asparagine 1064. A helical transmembrane segment spans residues 1068 to 1093 (FLVPLLSSVLTVAWVCCLVTAFYWCV). The Cytoplasmic segment spans residues 1094 to 1218 (RKRRKPSSHT…QSLNRMEYIV (125 aa)). Positions 1181-1218 (REEKAPSGTPTKHPNWTNKQDNRDLESAQSLNRMEYIV) are disordered. A compositionally biased stretch (polar residues) spans 1188–1199 (GTPTKHPNWTNK).

As to quaternary structure, interacts with NOTCH1, NOTCH2 and NOTCH3. In terms of tissue distribution, widely expressed in many tissues, with highest expression in brain, heart, muscle and thymus.

Its subcellular location is the membrane. It localises to the cell membrane. Its function is as follows. Ligand for multiple Notch receptors and involved in the mediation of Notch signaling. May be involved in cell-fate decisions during hematopoiesis. Seems to be involved in early and late stages of mammalian cardiovascular development. Inhibits myoblast differentiation. May regulate fibroblast growth factor-induced angiogenesis. The protein is Protein jagged-1 (Jag1) of Mus musculus (Mouse).